Reading from the N-terminus, the 794-residue chain is Glutamine--tRNA ligase (794 aa).

The segment at 192 to 217 (DNEKPKKKKEKPAKVEDKAAPVATSE) is disordered. A 'HIGH' region motif is present at residues 277-287 (PEPNGYLHIGH). ATP is bound by residues 278 to 280 (EPN) and 284 to 290 (HIGHAKA). 2 residues coordinate L-glutamine: Asp310 and Tyr450. ATP is bound by residues Thr469, 498-499 (RL), and 506-508 (MSK). A 'KMSKS' region motif is present at residues 505-509 (VMSKR).

Belongs to the class-I aminoacyl-tRNA synthetase family.

The catalysed reaction is tRNA(Gln) + L-glutamine + ATP = L-glutaminyl-tRNA(Gln) + AMP + diphosphate. This chain is Glutamine--tRNA ligase, found in Lupinus luteus (European yellow lupine).